The following is a 204-amino-acid chain: Urease accessory protein UreG (204 aa).

GTP is bound at residue 10-17 (GPVGAGKT).

The protein belongs to the SIMIBI class G3E GTPase family. UreG subfamily. In terms of assembly, homodimer. UreD, UreF and UreG form a complex that acts as a GTP-hydrolysis-dependent molecular chaperone, activating the urease apoprotein by helping to assemble the nickel containing metallocenter of UreC. The UreE protein probably delivers the nickel.

It is found in the cytoplasm. Its function is as follows. Facilitates the functional incorporation of the urease nickel metallocenter. This process requires GTP hydrolysis, probably effectuated by UreG. The chain is Urease accessory protein UreG from Bacillus sp. (strain TB-90).